The primary structure comprises 122 residues: MSNIYANSYLIVFVFLCLGVLLPIGALTIGRWLRPNVPDEAKATTYESGNIPFHDSRIQFQVRYYLFALLFVIFDVETVFLYPWAVVYDQLGLFALVEMIIFIVLLAIGLIYAWKKKVLRWM.

3 consecutive transmembrane segments (helical) span residues 10 to 30 (LIVF…LTIG), 67 to 87 (FALL…WAVV), and 91 to 111 (LGLF…IGLI).

Belongs to the complex I subunit 3 family. In terms of assembly, NDH-1 is composed of 14 different subunits. Subunits NuoA, H, J, K, L, M, N constitute the membrane sector of the complex.

It localises to the cell membrane. The catalysed reaction is a quinone + NADH + 5 H(+)(in) = a quinol + NAD(+) + 4 H(+)(out). Its function is as follows. NDH-1 shuttles electrons from NADH, via FMN and iron-sulfur (Fe-S) centers, to quinones in the respiratory chain. The immediate electron acceptor for the enzyme in this species is believed to be a menaquinone. Couples the redox reaction to proton translocation (for every two electrons transferred, four hydrogen ions are translocated across the cytoplasmic membrane), and thus conserves the redox energy in a proton gradient. This Geobacillus thermodenitrificans (strain NG80-2) protein is NADH-quinone oxidoreductase subunit A.